The chain runs to 431 residues: Phosphomethylpyrimidine synthase (431 aa).

Residues Asn66, Met95, Tyr124, His163, 185–187, 226–229, and Glu265 contribute to the substrate site; these read SRG and DGLR. His269 lines the Zn(2+) pocket. Position 292 (Tyr292) interacts with substrate. Residue His333 coordinates Zn(2+). The [4Fe-4S] cluster site is built by Cys408, Cys411, and Cys415.

It belongs to the ThiC family. The cofactor is [4Fe-4S] cluster.

The enzyme catalyses 5-amino-1-(5-phospho-beta-D-ribosyl)imidazole + S-adenosyl-L-methionine = 4-amino-2-methyl-5-(phosphooxymethyl)pyrimidine + CO + 5'-deoxyadenosine + formate + L-methionine + 3 H(+). Its pathway is cofactor biosynthesis; thiamine diphosphate biosynthesis. In terms of biological role, catalyzes the synthesis of the hydroxymethylpyrimidine phosphate (HMP-P) moiety of thiamine from aminoimidazole ribotide (AIR) in a radical S-adenosyl-L-methionine (SAM)-dependent reaction. The protein is Phosphomethylpyrimidine synthase of Dehalococcoides mccartyi (strain ATCC BAA-2100 / JCM 16839 / KCTC 5957 / BAV1).